The chain runs to 515 residues: Cytochrome P450 2D7 (515 aa).

The Extracellular portion of the chain corresponds to methionine 1–glycine 2. The chain crosses the membrane as a helical span at residues leucine 3–methionine 23. At histidine 24–asparagine 301 the chain is on the cytoplasmic side. The helical transmembrane segment at leucine 302–isoleucine 322 threads the bilayer. Topologically, residues leucine 323 to arginine 515 are extracellular. A glycan (N-linked (GlcNAc...) asparagine) is linked at asparagine 416. Cysteine 461 is a binding site for heme.

Belongs to the cytochrome P450 family. The cofactor is heme. As to expression, expressed in brain cortex (at protein level).

It localises to the membrane. The protein resides in the cytoplasm. The protein localises to the mitochondrion. The enzyme catalyses an organic molecule + reduced [NADPH--hemoprotein reductase] + O2 = an alcohol + oxidized [NADPH--hemoprotein reductase] + H2O + H(+). May be responsible for the metabolism of many drugs and environmental chemicals that it oxidizes. It may be involved in the metabolism of codeine to morphine. However, another study could not confirm it. This Homo sapiens (Human) protein is Cytochrome P450 2D7.